The following is a 160-amino-acid chain: 2-C-methyl-D-erythritol 2,4-cyclodiphosphate synthase (160 aa).

A divalent metal cation is bound by residues Asp11 and His13. 4-CDP-2-C-methyl-D-erythritol 2-phosphate is bound by residues 11–13 (DVH) and 37–38 (HS). His45 is a binding site for a divalent metal cation. 4-CDP-2-C-methyl-D-erythritol 2-phosphate contacts are provided by residues 59–61 (DIG), 64–68 (FPDTD), 103–109 (AQAPKMA), 135–138 (TTTE), Phe142, and Arg145.

This sequence belongs to the IspF family. In terms of assembly, homotrimer. It depends on a divalent metal cation as a cofactor.

The enzyme catalyses 4-CDP-2-C-methyl-D-erythritol 2-phosphate = 2-C-methyl-D-erythritol 2,4-cyclic diphosphate + CMP. Its pathway is isoprenoid biosynthesis; isopentenyl diphosphate biosynthesis via DXP pathway; isopentenyl diphosphate from 1-deoxy-D-xylulose 5-phosphate: step 4/6. Its function is as follows. Involved in the biosynthesis of isopentenyl diphosphate (IPP) and dimethylallyl diphosphate (DMAPP), two major building blocks of isoprenoid compounds. Catalyzes the conversion of 4-diphosphocytidyl-2-C-methyl-D-erythritol 2-phosphate (CDP-ME2P) to 2-C-methyl-D-erythritol 2,4-cyclodiphosphate (ME-CPP) with a corresponding release of cytidine 5-monophosphate (CMP). This is 2-C-methyl-D-erythritol 2,4-cyclodiphosphate synthase from Thiobacillus denitrificans (strain ATCC 25259 / T1).